Consider the following 1098-residue polypeptide: Eukaryotic translation initiation factor 3 subunit A (1098 aa).

Residues 324 to 503 (AQEQATRVLL…DCVRFGSSDA (180 aa)) enclose the PCI domain. A coiled-coil region spans residues 574-844 (TEIERIHRRK…ARQAVIDSQR (271 aa)). 2 disordered regions span residues 599 to 648 (EKAA…KIKR) and 805 to 1098 (RAEK…NWRR). 3 stretches are compositionally biased toward basic and acidic residues: residues 608–648 (QAKR…KIKR), 805–857 (RAEK…REME), and 877–895 (MPQR…EPFR). Over residues 905–914 (DSSWRSSAQP) the composition is skewed to polar residues. Composition is skewed to basic and acidic residues over residues 916 to 978 (RKPD…ERGA) and 1054 to 1079 (LPPR…RDGP). The span at 1080–1098 (NRNSGANNAGNADSANWRR) shows a compositional bias: low complexity.

Belongs to the eIF-3 subunit A family. Component of the eukaryotic translation initiation factor 3 (eIF-3) complex.

The protein resides in the cytoplasm. RNA-binding component of the eukaryotic translation initiation factor 3 (eIF-3) complex, which is involved in protein synthesis of a specialized repertoire of mRNAs and, together with other initiation factors, stimulates binding of mRNA and methionyl-tRNAi to the 40S ribosome. The eIF-3 complex specifically targets and initiates translation of a subset of mRNAs involved in cell proliferation. This chain is Eukaryotic translation initiation factor 3 subunit A, found in Caenorhabditis briggsae.